Consider the following 294-residue polypeptide: Glutamyl-Q tRNA(Asp) synthetase (294 aa).

L-glutamate is bound by residues 8–12 and glutamate 44; that span reads RFAPT. Positions 11-21 match the 'HIGH' region motif; that stretch reads PTPSGYLHFGS. Zn(2+) contacts are provided by cysteine 100, cysteine 102, tyrosine 114, and cysteine 118. Residues tyrosine 171 and arginine 189 each coordinate L-glutamate. The 'KMSKS' region signature appears at 227–231; it reads KLGKS. Lysine 230 lines the ATP pocket.

It belongs to the class-I aminoacyl-tRNA synthetase family. GluQ subfamily. Requires Zn(2+) as cofactor.

In terms of biological role, catalyzes the tRNA-independent activation of glutamate in presence of ATP and the subsequent transfer of glutamate onto a tRNA(Asp). Glutamate is transferred on the 2-amino-5-(4,5-dihydroxy-2-cyclopenten-1-yl) moiety of the queuosine in the wobble position of the QUC anticodon. The sequence is that of Glutamyl-Q tRNA(Asp) synthetase from Ectopseudomonas mendocina (strain ymp) (Pseudomonas mendocina).